The following is a 292-amino-acid chain: 4-hydroxy-tetrahydrodipicolinate synthase (292 aa).

Thr-45 serves as a coordination point for pyruvate. The active-site Proton donor/acceptor is the Tyr-133. Catalysis depends on Lys-161, which acts as the Schiff-base intermediate with substrate. Ile-203 serves as a coordination point for pyruvate.

The protein belongs to the DapA family. As to quaternary structure, homotetramer; dimer of dimers.

Its subcellular location is the cytoplasm. The enzyme catalyses L-aspartate 4-semialdehyde + pyruvate = (2S,4S)-4-hydroxy-2,3,4,5-tetrahydrodipicolinate + H2O + H(+). It participates in amino-acid biosynthesis; L-lysine biosynthesis via DAP pathway; (S)-tetrahydrodipicolinate from L-aspartate: step 3/4. Functionally, catalyzes the condensation of (S)-aspartate-beta-semialdehyde [(S)-ASA] and pyruvate to 4-hydroxy-tetrahydrodipicolinate (HTPA). This is 4-hydroxy-tetrahydrodipicolinate synthase from Azoarcus sp. (strain BH72).